The chain runs to 592 residues: Arginine--tRNA ligase (592 aa).

The short motif at 134–144 is the 'HIGH' region element; the sequence is ANPTGPLHVGH.

The protein belongs to the class-I aminoacyl-tRNA synthetase family. As to quaternary structure, monomer.

The protein resides in the cytoplasm. It catalyses the reaction tRNA(Arg) + L-arginine + ATP = L-arginyl-tRNA(Arg) + AMP + diphosphate. The protein is Arginine--tRNA ligase of Coxiella burnetii (strain RSA 493 / Nine Mile phase I).